A 266-amino-acid polypeptide reads, in one-letter code: Receptor-recognizing protein gp38 (266 aa).

10 short sequence motifs (GRM) span residues 116-123 (GRGGNGGY), 126-137 (SGGDGNGTQGGH), 157-171 (AGGG…RPHS), 174-184 (KWQDIGGGGGR), 187-191 (GGAGG), 194-200 (YSGGAAS), 202-209 (EGPGGGYD), 214-220 (HSGAGGN), 223-228 (AAGQNA), and 232-246 (GGKV…ASGH).

This sequence belongs to the receptor-recognizing protein gp38 family.

It localises to the virion. Its function is as follows. Receptor binding protein (RBP) that is at the tip of the long tail fibers and serves as the phage recognition site for the attachment host receptor. Probably uses the host receptor OmpA. In Enterobacteria phage Ox2 (Bacteriophage Ox2), this protein is Receptor-recognizing protein gp38 (38).